Consider the following 517-residue polypeptide: Probable mannosyltransferase KTR7 (517 aa).

The Cytoplasmic portion of the chain corresponds to Met1–Gly23. The helical; Signal-anchor for type II membrane protein transmembrane segment at Phe24–Ala44 threads the bilayer. The stem region stretch occupies residues Lys45 to Tyr85. Residues Lys45–Glu517 are Lumenal-facing. Positions Ser86 to Glu517 are catalytic. Residues Asn89 and Asn144 are each glycosylated (N-linked (GlcNAc...) asparagine). Glu367 (nucleophile) is an active-site residue.

This sequence belongs to the glycosyltransferase 15 family.

It is found in the membrane. In terms of biological role, possible glycosyltransferase that transfers an alpha-D-mannosyl residue from GDP-mannose into lipid-linked oligosaccharide, forming an alpha-(1-&gt;2)-D-mannosyl-D-mannose linkage. This is Probable mannosyltransferase KTR7 (KTR7) from Saccharomyces cerevisiae (strain ATCC 204508 / S288c) (Baker's yeast).